We begin with the raw amino-acid sequence, 358 residues long: Chorismate synthase (358 aa).

Position 47 (Arg-47) interacts with NADP(+). Residues 124-126 (RSS), 240-241 (NA), Gly-284, 299-303 (KPVAT), and Arg-325 contribute to the FMN site.

The protein belongs to the chorismate synthase family. As to quaternary structure, homotetramer. It depends on FMNH2 as a cofactor.

The enzyme catalyses 5-O-(1-carboxyvinyl)-3-phosphoshikimate = chorismate + phosphate. It participates in metabolic intermediate biosynthesis; chorismate biosynthesis; chorismate from D-erythrose 4-phosphate and phosphoenolpyruvate: step 7/7. In terms of biological role, catalyzes the anti-1,4-elimination of the C-3 phosphate and the C-6 proR hydrogen from 5-enolpyruvylshikimate-3-phosphate (EPSP) to yield chorismate, which is the branch point compound that serves as the starting substrate for the three terminal pathways of aromatic amino acid biosynthesis. This reaction introduces a second double bond into the aromatic ring system. This chain is Chorismate synthase, found in Bacteroides fragilis (strain YCH46).